The primary structure comprises 171 residues: SWR1 complex subunit 6 (171 aa).

Residues Asp63 to Lys87 form a disordered region. Basic residues predominate over residues Lys73–Gln85. Zn(2+) is bound by residues Cys134, Cys137, Cys145, Cys148, Cys153, Cys157, His161, and Cys166. Residues Cys134 to Cys166 form an HIT-type zinc finger.

Belongs to the ZNHIT1 family. Homodimer. Component of the SWR1 chromatin-remodeling complex composed of at least ARP6/ESD1/SUF3, PIE1, SWC6, SWC2 and H2AZs (HTA8, HTA9, HTA11). Interacts directly with ARP6, PIE1 and SWC2. Interacts with FLX and SUF4, two component of the transcription activator complex FRI-C, and with ASHH2 and TAF14. As to expression, expressed in root, lateral root primordia, shoot apex, leaves, stems, inflorescences, flowers, axillary buds, developing siliques and premature seeds.

The protein localises to the nucleus speckle. It is found in the nucleus. In terms of biological role, component of the SWR1 complex which mediates the ATP-dependent exchange of histone H2A for the H2A variant H2A.F/Z leading to transcriptional regulation of selected genes (e.g. FLC) by chromatin remodeling. Coodinates SWR1-C, FRI-C (FLC transcription activator complex), histone methyltransferase and general transcription factors. Represses flowering by positively regulating FLC and MAF4. Binds to the promoter region of FLC chromatin. This Arabidopsis thaliana (Mouse-ear cress) protein is SWR1 complex subunit 6 (SWC6).